Consider the following 810-residue polypeptide: Leucine--tRNA ligase (810 aa).

Positions P41–H52 match the 'HIGH' region motif. The 'KMSKS' region motif lies at K582–S586. K585 is an ATP binding site.

It belongs to the class-I aminoacyl-tRNA synthetase family.

The protein localises to the cytoplasm. The enzyme catalyses tRNA(Leu) + L-leucine + ATP = L-leucyl-tRNA(Leu) + AMP + diphosphate. This is Leucine--tRNA ligase from Oenococcus oeni (strain ATCC BAA-331 / PSU-1).